Reading from the N-terminus, the 231-residue chain is Probable caffeoyl-CoA O-methyltransferase 2 (231 aa).

S-adenosyl-L-methionine-binding positions include Thr53, Asp75, 77–78 (GV), Ser83, Asp101, Ala130, Asp152, Asp154, and Tyr161. Asp152 contributes to the a divalent metal cation binding site. Residues Asp178 and Asn179 each coordinate a divalent metal cation.

It belongs to the class I-like SAM-binding methyltransferase superfamily. Cation-dependent O-methyltransferase family. CCoAMT subfamily.

It catalyses the reaction (E)-caffeoyl-CoA + S-adenosyl-L-methionine = (E)-feruloyl-CoA + S-adenosyl-L-homocysteine + H(+). This Dictyostelium discoideum (Social amoeba) protein is Probable caffeoyl-CoA O-methyltransferase 2 (omt6).